The following is a 118-amino-acid chain: UPF0295 protein BCE33L0445 (118 aa).

A run of 2 helical transmembrane segments spans residues 12–32 (IRTFALSLVFIGLFIAYLGVF) and 43–63 (FMMVGFLAVIASTVVYFWIGM).

The protein belongs to the UPF0295 family.

The protein resides in the cell membrane. The polypeptide is UPF0295 protein BCE33L0445 (Bacillus cereus (strain ZK / E33L)).